Reading from the N-terminus, the 691-residue chain is Transcription termination factor Rho (691 aa).

A disordered region spans residues 48–303 (ISDHQRGGSV…PEVDETELTE (256 aa)). Basic and acidic residues predominate over residues 50-64 (DHQRGGSVADRDAAE). 2 stretches are compositionally biased toward low complexity: residues 65 to 92 (RAAQ…PAAE) and 105 to 119 (DTSA…QPQA). 2 stretches are compositionally biased toward basic and acidic residues: residues 120-158 (EARE…SERR) and 188-273 (DADR…EGGR). A Rho RNA-BD domain is found at 307-390 (LQPVAGILDV…VKISSVNGQP (84 aa)). ATP contacts are provided by residues 433-438 (GKGQRG), 445-450 (KAGKTM), and R476.

It belongs to the Rho family. As to quaternary structure, homohexamer. The homohexamer assembles into an open ring structure.

Functionally, facilitates transcription termination by a mechanism that involves Rho binding to the nascent RNA, activation of Rho's RNA-dependent ATPase activity, and release of the mRNA from the DNA template. The polypeptide is Transcription termination factor Rho (Micrococcus luteus (Micrococcus lysodeikticus)).